The primary structure comprises 713 residues: Probable glutamate carboxypeptidase VP8 (713 aa).

At 1–10 the chain is on the cytoplasmic side; that stretch reads MPHSVLARLP. A helical; Signal-anchor for type II membrane protein membrane pass occupies residues 11–31; the sequence is PGSVRLVAAFGLLLLVSLLVL. The Extracellular segment spans residues 32–713; it reads HRRPGRPHVA…PTNFSSLVTP (682 aa). 2 N-linked (GlcNAc...) asparagine glycosylation sites follow: asparagine 66 and asparagine 311. Positions 245–539 are catalytic; sequence ATSGAERLKF…EIWGLLALRL (295 aa). The Zn(2+) site is built by histidine 345 and aspartate 355. Residue glutamate 392 is the Nucleophile of the active site. Residues glutamate 393, aspartate 421, and histidine 505 each contribute to the Zn(2+) site. 2 N-linked (GlcNAc...) asparagine glycosylation sites follow: asparagine 667 and asparagine 706.

Belongs to the peptidase M28 family. M28B subfamily. Zn(2+) is required as a cofactor.

Its subcellular location is the cell membrane. It catalyses the reaction Release of an unsubstituted, C-terminal glutamyl residue, typically from Ac-Asp-Glu or folylpoly-gamma-glutamates.. Involved in the regulation of meristem development and seed maturation processes. Mediates regulation of embryonic regulatory genes and genes controlling abscisic acid (ABA) biosynthesis and turnover in developing seeds. May be required for the synthesis of small signaling molecules that integrates meristem and embryo formation in seeds. The protein is Probable glutamate carboxypeptidase VP8 of Zea mays (Maize).